The sequence spans 450 residues: Phosphoglucosamine mutase (450 aa).

The active-site Phosphoserine intermediate is the S103. Residues S103, D243, D245, and D247 each coordinate Mg(2+). S103 carries the post-translational modification Phosphoserine.

This sequence belongs to the phosphohexose mutase family. Mg(2+) is required as a cofactor. Post-translationally, activated by phosphorylation.

It catalyses the reaction alpha-D-glucosamine 1-phosphate = D-glucosamine 6-phosphate. Functionally, catalyzes the conversion of glucosamine-6-phosphate to glucosamine-1-phosphate. This Lactobacillus delbrueckii subsp. bulgaricus (strain ATCC 11842 / DSM 20081 / BCRC 10696 / JCM 1002 / NBRC 13953 / NCIMB 11778 / NCTC 12712 / WDCM 00102 / Lb 14) protein is Phosphoglucosamine mutase.